The following is a 456-amino-acid chain: Bifunctional protein GlmU (456 aa).

Residues 1 to 229 (MSNSAMSVVI…LSEVEGVNNR (229 aa)) form a pyrophosphorylase region. UDP-N-acetyl-alpha-D-glucosamine is bound by residues 11–14 (LAAG), K25, Q76, 81–82 (GT), 103–105 (YGD), G140, E154, N169, and N227. Residue D105 participates in Mg(2+) binding. N227 contacts Mg(2+). A linker region spans residues 230 to 250 (LQLARLERVYQAEQAEKLLLA). The interval 251–456 (GVMLRDPARF…QGWQRPVKKK (206 aa)) is N-acetyltransferase. Positions 333 and 351 each coordinate UDP-N-acetyl-alpha-D-glucosamine. The active-site Proton acceptor is H363. Residues Y366 and N377 each coordinate UDP-N-acetyl-alpha-D-glucosamine. Acetyl-CoA is bound by residues A380, 386-387 (NY), S405, A423, and R440.

It in the N-terminal section; belongs to the N-acetylglucosamine-1-phosphate uridyltransferase family. In the C-terminal section; belongs to the transferase hexapeptide repeat family. Homotrimer. The cofactor is Mg(2+).

The protein resides in the cytoplasm. It catalyses the reaction alpha-D-glucosamine 1-phosphate + acetyl-CoA = N-acetyl-alpha-D-glucosamine 1-phosphate + CoA + H(+). The catalysed reaction is N-acetyl-alpha-D-glucosamine 1-phosphate + UTP + H(+) = UDP-N-acetyl-alpha-D-glucosamine + diphosphate. Its pathway is nucleotide-sugar biosynthesis; UDP-N-acetyl-alpha-D-glucosamine biosynthesis; N-acetyl-alpha-D-glucosamine 1-phosphate from alpha-D-glucosamine 6-phosphate (route II): step 2/2. It participates in nucleotide-sugar biosynthesis; UDP-N-acetyl-alpha-D-glucosamine biosynthesis; UDP-N-acetyl-alpha-D-glucosamine from N-acetyl-alpha-D-glucosamine 1-phosphate: step 1/1. It functions in the pathway bacterial outer membrane biogenesis; LPS lipid A biosynthesis. Its function is as follows. Catalyzes the last two sequential reactions in the de novo biosynthetic pathway for UDP-N-acetylglucosamine (UDP-GlcNAc). The C-terminal domain catalyzes the transfer of acetyl group from acetyl coenzyme A to glucosamine-1-phosphate (GlcN-1-P) to produce N-acetylglucosamine-1-phosphate (GlcNAc-1-P), which is converted into UDP-GlcNAc by the transfer of uridine 5-monophosphate (from uridine 5-triphosphate), a reaction catalyzed by the N-terminal domain. In Klebsiella pneumoniae subsp. pneumoniae (strain ATCC 700721 / MGH 78578), this protein is Bifunctional protein GlmU.